The primary structure comprises 494 residues: Aspartyl/glutamyl-tRNA(Asn/Gln) amidotransferase subunit B (494 aa).

This sequence belongs to the GatB/GatE family. GatB subfamily. In terms of assembly, heterotrimer of A, B and C subunits.

The catalysed reaction is L-glutamyl-tRNA(Gln) + L-glutamine + ATP + H2O = L-glutaminyl-tRNA(Gln) + L-glutamate + ADP + phosphate + H(+). It catalyses the reaction L-aspartyl-tRNA(Asn) + L-glutamine + ATP + H2O = L-asparaginyl-tRNA(Asn) + L-glutamate + ADP + phosphate + 2 H(+). Functionally, allows the formation of correctly charged Asn-tRNA(Asn) or Gln-tRNA(Gln) through the transamidation of misacylated Asp-tRNA(Asn) or Glu-tRNA(Gln) in organisms which lack either or both of asparaginyl-tRNA or glutaminyl-tRNA synthetases. The reaction takes place in the presence of glutamine and ATP through an activated phospho-Asp-tRNA(Asn) or phospho-Glu-tRNA(Gln). The protein is Aspartyl/glutamyl-tRNA(Asn/Gln) amidotransferase subunit B of Synechococcus elongatus (strain ATCC 33912 / PCC 7942 / FACHB-805) (Anacystis nidulans R2).